A 466-amino-acid chain; its full sequence is 3-isopropylmalate dehydratase large subunit (466 aa).

3 residues coordinate [4Fe-4S] cluster: cysteine 347, cysteine 407, and cysteine 410.

Belongs to the aconitase/IPM isomerase family. LeuC type 1 subfamily. Heterodimer of LeuC and LeuD. It depends on [4Fe-4S] cluster as a cofactor.

It carries out the reaction (2R,3S)-3-isopropylmalate = (2S)-2-isopropylmalate. It participates in amino-acid biosynthesis; L-leucine biosynthesis; L-leucine from 3-methyl-2-oxobutanoate: step 2/4. Its function is as follows. Catalyzes the isomerization between 2-isopropylmalate and 3-isopropylmalate, via the formation of 2-isopropylmaleate. The sequence is that of 3-isopropylmalate dehydratase large subunit from Shigella sonnei (strain Ss046).